The chain runs to 908 residues: DNA mismatch repair protein MutS (908 aa).

629-636 provides a ligand contact to ATP; the sequence is GPNMAGKS. The segment at 822-863 is disordered; that stretch reads ADEADGAPSEDPPSEDPPSGDGVRAKKGEADAVPDLEDSQAN.

It belongs to the DNA mismatch repair MutS family.

Its function is as follows. This protein is involved in the repair of mismatches in DNA. It is possible that it carries out the mismatch recognition step. This protein has a weak ATPase activity. The protein is DNA mismatch repair protein MutS of Salinibacter ruber (strain DSM 13855 / M31).